We begin with the raw amino-acid sequence, 334 residues long: Nucleoid-associated protein YejK (334 aa).

The protein belongs to the YejK family.

It localises to the cytoplasm. The protein resides in the nucleoid. The protein is Nucleoid-associated protein YejK of Escherichia fergusonii (strain ATCC 35469 / DSM 13698 / CCUG 18766 / IAM 14443 / JCM 21226 / LMG 7866 / NBRC 102419 / NCTC 12128 / CDC 0568-73).